We begin with the raw amino-acid sequence, 123 residues long: MTQFKRADRVADLVKMEIADILLRRIRDPRVSRLTVTGVKVSDDLRTARIFFVEMGEDSCHPETLEGLQKAGGFIRKELGKRLKLRYVPDLIFKPDSSFAYGSRIDQLINEIHREEENDGSDT.

The protein belongs to the RbfA family. In terms of assembly, monomer. Binds 30S ribosomal subunits, but not 50S ribosomal subunits or 70S ribosomes.

Its subcellular location is the cytoplasm. In terms of biological role, one of several proteins that assist in the late maturation steps of the functional core of the 30S ribosomal subunit. Associates with free 30S ribosomal subunits (but not with 30S subunits that are part of 70S ribosomes or polysomes). Required for efficient processing of 16S rRNA. May interact with the 5'-terminal helix region of 16S rRNA. The polypeptide is Ribosome-binding factor A (Syntrophus aciditrophicus (strain SB)).